Reading from the N-terminus, the 105-residue chain is Pyrimidine/purine nucleoside phosphorylase (105 aa).

Belongs to the nucleoside phosphorylase PpnP family.

The enzyme catalyses a purine D-ribonucleoside + phosphate = a purine nucleobase + alpha-D-ribose 1-phosphate. The catalysed reaction is adenosine + phosphate = alpha-D-ribose 1-phosphate + adenine. It catalyses the reaction cytidine + phosphate = cytosine + alpha-D-ribose 1-phosphate. It carries out the reaction guanosine + phosphate = alpha-D-ribose 1-phosphate + guanine. The enzyme catalyses inosine + phosphate = alpha-D-ribose 1-phosphate + hypoxanthine. The catalysed reaction is thymidine + phosphate = 2-deoxy-alpha-D-ribose 1-phosphate + thymine. It catalyses the reaction uridine + phosphate = alpha-D-ribose 1-phosphate + uracil. It carries out the reaction xanthosine + phosphate = alpha-D-ribose 1-phosphate + xanthine. Its function is as follows. Catalyzes the phosphorolysis of diverse nucleosides, yielding D-ribose 1-phosphate and the respective free bases. Can use uridine, adenosine, guanosine, cytidine, thymidine, inosine and xanthosine as substrates. Also catalyzes the reverse reactions. The sequence is that of Pyrimidine/purine nucleoside phosphorylase from Wolinella succinogenes (strain ATCC 29543 / DSM 1740 / CCUG 13145 / JCM 31913 / LMG 7466 / NCTC 11488 / FDC 602W) (Vibrio succinogenes).